A 191-amino-acid polypeptide reads, in one-letter code: ATP-dependent dethiobiotin synthetase BioD 2 (191 aa).

13–18 is a binding site for ATP; that stretch reads DVGKTI. A Mg(2+)-binding site is contributed by Thr-17. Lys-38 is an active-site residue. Thr-42 provides a ligand contact to substrate. Residues Asp-50 and 115-118 each bind ATP; that span reads EGAG. Positions 50 and 115 each coordinate Mg(2+).

The protein belongs to the dethiobiotin synthetase family. Homodimer. Requires Mg(2+) as cofactor.

The protein resides in the cytoplasm. It carries out the reaction (7R,8S)-7,8-diammoniononanoate + CO2 + ATP = (4R,5S)-dethiobiotin + ADP + phosphate + 3 H(+). Its pathway is cofactor biosynthesis; biotin biosynthesis; biotin from 7,8-diaminononanoate: step 1/2. In terms of biological role, catalyzes a mechanistically unusual reaction, the ATP-dependent insertion of CO2 between the N7 and N8 nitrogen atoms of 7,8-diaminopelargonic acid (DAPA, also called 7,8-diammoniononanoate) to form a ureido ring. The chain is ATP-dependent dethiobiotin synthetase BioD 2 from Haemophilus influenzae (strain ATCC 51907 / DSM 11121 / KW20 / Rd).